We begin with the raw amino-acid sequence, 1100 residues long: cGMP-inhibited 3',5'-cyclic phosphodiesterase 3B (1100 aa).

Residues 1 to 11 show a composition bias toward basic and acidic residues; the sequence is MRKDERERDAP. Residues 1–28 are interaction with RAPGEF3; that stretch reads MRKDERERDAPAMRSPPPPPASAASPPE. Residues 1–29 form a disordered region; that stretch reads MRKDERERDAPAMRSPPPPPASAASPPES. The residue at position 15 (Ser-15) is a Phosphoserine. 6 helical membrane passes run 69–89, 110–130, 140–160, 170–190, 198–218, and 225–245; these read AGAR…LLGA, LSLS…CFLT, AGSW…FAAW, PAAA…TLAP, VLVL…LGAL, and LLSC…DHFF. Ser-273 carries the phosphoserine; by PKB/AKT1 or PKB/AKT2 modification. Phosphoserine is present on residues Ser-274 and Ser-421. Disordered stretches follow at residues 400-423 and 570-590; these read RKLH…SSGA and EPDG…SVFS. Polar residues predominate over residues 408–423; it reads GRTSFPTPQLRRSSGA. Residues 415-439 are interaction with PIK3R6; it reads PQLRRSSGASSLLTNEHCSRWDRSS. Residues 573-583 show a composition bias toward basic and acidic residues; the sequence is GTDHPSEKSGE. Residues 627–1061 enclose the PDEase domain; it reads PNIDQEVSLD…KIWKEIIEEE (435 aa). The active-site Proton donor is the His-713. Residue His-713 coordinates AMP. 4 residues coordinate Mg(2+): His-717, His-797, Asp-798, and Asp-913. Residues Asp-798, Asp-913, and Gln-964 each contribute to the AMP site. Residues 993–1024 are compositionally biased toward acidic residues; the sequence is EEGDDTESDDDDDDDDGDGGEELDSDDEETED. Residues 993–1033 are disordered; that stretch reads EEGDDTESDDDDDDDDGDGGEELDSDDEETEDNLNPKPQRR. Residues 1044 to 1079 are a coiled coil; that stretch reads MHHLTENHKIWKEIIEEEEEKCKAEGNKLQVDNASL.

This sequence belongs to the cyclic nucleotide phosphodiesterase family. PDE3 subfamily. In terms of assembly, homodimer. Interacts with PIK3CG; regulates PDE3B activity and thereby cAMP levels in cells. Interacts with RAPGEF3 and PIK3R6; form a signaling complex that regulates phosphatidylinositol 3-kinase gamma in angiogenesis. Interacts with ABHD15; this interaction regulates PDE3B's stability and expression and, thereby, impacts the antilipolytic action of insulin. It depends on Mg(2+) as a cofactor. Mn(2+) serves as cofactor. Phosphorylation at Ser-273 mediates insulin-induced activation of PDE3B. Abundant in adipose tissues.

It localises to the membrane. The catalysed reaction is a nucleoside 3',5'-cyclic phosphate + H2O = a nucleoside 5'-phosphate + H(+). The enzyme catalyses 3',5'-cyclic AMP + H2O = AMP + H(+). It carries out the reaction 3',5'-cyclic GMP + H2O = GMP + H(+). Its activity is regulated as follows. Inhibited by cGMP. Its function is as follows. Cyclic nucleotide phosphodiesterase with a dual-specificity for the second messengers cAMP and cGMP, which are key regulators of many important physiological processes. Regulates angiogenesis by inhibiting the cAMP-dependent guanine nucleotide exchange factor RAPGEF3 and downstream phosphatidylinositol 3-kinase gamma-mediated signaling. Controls cardiac contractility by reducing cAMP concentration in cardiocytes. This is cGMP-inhibited 3',5'-cyclic phosphodiesterase 3B from Mus musculus (Mouse).